The following is a 106-amino-acid chain: Small ribosomal subunit protein mS33 (106 aa).

Ser-2 bears the N-acetylserine mark. Residues 81 to 106 (EQRRLKKLRGKGKPRKGEGKRATKKK) form a disordered region. Basic residues predominate over residues 84–94 (RLKKLRGKGKP). Residues 95-106 (RKGEGKRATKKK) are compositionally biased toward basic and acidic residues.

The protein belongs to the mitochondrion-specific ribosomal protein mS33 family. Component of the mitochondrial ribosome small subunit (28S) which comprises a 12S rRNA and about 30 distinct proteins.

The protein resides in the mitochondrion. In Mus musculus (Mouse), this protein is Small ribosomal subunit protein mS33 (Mrps33).